A 540-amino-acid polypeptide reads, in one-letter code: MEKCGFNSMLSNEELEHKCELSKSMDSLGLIGNTGAGGGPTLIFDVRDILSLIYDDTFKLKDRNGDSYSVYFDIDNKIFEIDDDSDSLSGLDIENQNQIFFDIYNDSDSLSELDSENKNFEIHNESDFMSKLESSFFSYLTYSCLKRRSSFSSYPTSLTSSNLNSGSKSYNPYYDPYMHDTRYSWNNDININSCIDSYIRCEIDSISSGSDNCSDSYIYSYICSEGVSYSDNGSSSIRTRTSTSSGSSYHIRGRSNNFEKNKKLKKLWVQCENCYALNYNKLFRSKMNVCEQCGYHLKMSSSDRIELSIDPGTWHPMDEDMVSTDPIEFHSEEEPYRDRIDSYQRQAGLTDAVQTGIGQLEGIPIAIGVMDFQFMGGSMGSVVGEKITRLIEYAIDRSLPVVIVCASGGARMQEGGLSLMQMAKISSASYNYQSNKKLFYVSILTSPTTGGVTASFGMLGDIIIAEPNAYVAFAGKRVIEETLNKKIPDGLQVAEYSFHKGLFDSIVPRNPLKGVPSELFQLHGFFSSTFHPLKSNKVKR.

Residues Tyr229–Tyr249 are disordered. Over residues Gly233 to Ser248 the composition is skewed to low complexity. One can recognise a CoA carboxyltransferase N-terminal domain in the interval Leu267–Val538. Residues Cys271, Cys274, Cys290, and Cys293 each coordinate Zn(2+). Residues Cys271 to Cys293 form a C4-type zinc finger.

It belongs to the AccD/PCCB family. In terms of assembly, acetyl-CoA carboxylase is a heterohexamer composed of biotin carboxyl carrier protein, biotin carboxylase and 2 subunits each of ACCase subunit alpha and ACCase plastid-coded subunit beta (accD). Requires Zn(2+) as cofactor.

It localises to the plastid. The protein localises to the chloroplast stroma. The catalysed reaction is N(6)-carboxybiotinyl-L-lysyl-[protein] + acetyl-CoA = N(6)-biotinyl-L-lysyl-[protein] + malonyl-CoA. Its pathway is lipid metabolism; malonyl-CoA biosynthesis; malonyl-CoA from acetyl-CoA: step 1/1. Its function is as follows. Component of the acetyl coenzyme A carboxylase (ACC) complex. Biotin carboxylase (BC) catalyzes the carboxylation of biotin on its carrier protein (BCCP) and then the CO(2) group is transferred by the transcarboxylase to acetyl-CoA to form malonyl-CoA. The sequence is that of Acetyl-coenzyme A carboxylase carboxyl transferase subunit beta, chloroplastic from Amborella trichopoda.